The chain runs to 122 residues: Large ribosomal subunit protein uL14 (122 aa).

The protein belongs to the universal ribosomal protein uL14 family. As to quaternary structure, part of the 50S ribosomal subunit. Forms a cluster with proteins L3 and L19. In the 70S ribosome, L14 and L19 interact and together make contacts with the 16S rRNA in bridges B5 and B8.

Functionally, binds to 23S rRNA. Forms part of two intersubunit bridges in the 70S ribosome. This chain is Large ribosomal subunit protein uL14, found in Desulfotalea psychrophila (strain LSv54 / DSM 12343).